Here is a 253-residue protein sequence, read N- to C-terminus: Tetraspanin-11 (253 aa).

4 helical membrane passes run 19-39 (LLFIFNFFFWVGGAAVMAVGV), 63-83 (ILIFAGALVMVTGFLGFGAVI), 90-110 (LSAYFCLLLAIFLVELVAGVL), and 220-240 (LLLMGAVGIGVACLQICGMIL).

The protein belongs to the tetraspanin (TM4SF) family.

Its subcellular location is the membrane. The chain is Tetraspanin-11 (TSPAN11) from Bos taurus (Bovine).